The following is a 209-amino-acid chain: Ribosomal RNA small subunit methyltransferase G (209 aa).

S-adenosyl-L-methionine-binding positions include glycine 71, phenylalanine 76, 122–123 (AE), and arginine 135.

This sequence belongs to the methyltransferase superfamily. RNA methyltransferase RsmG family.

It localises to the cytoplasm. Its function is as follows. Specifically methylates the N7 position of a guanine in 16S rRNA. This chain is Ribosomal RNA small subunit methyltransferase G, found in Phocaeicola vulgatus (strain ATCC 8482 / DSM 1447 / JCM 5826 / CCUG 4940 / NBRC 14291 / NCTC 11154) (Bacteroides vulgatus).